A 187-amino-acid chain; its full sequence is Elongation factor P (187 aa).

Belongs to the elongation factor P family.

The protein resides in the cytoplasm. It participates in protein biosynthesis; polypeptide chain elongation. Functionally, involved in peptide bond synthesis. Stimulates efficient translation and peptide-bond synthesis on native or reconstituted 70S ribosomes in vitro. Probably functions indirectly by altering the affinity of the ribosome for aminoacyl-tRNA, thus increasing their reactivity as acceptors for peptidyl transferase. The polypeptide is Elongation factor P (Roseobacter denitrificans (strain ATCC 33942 / OCh 114) (Erythrobacter sp. (strain OCh 114))).